The sequence spans 108 residues: Thioredoxin (108 aa).

The region spanning 2-108 is the Thioredoxin domain; sequence GKYFEATDKN…IAKKIDEHIG (107 aa). Residues Cys-32 and Cys-35 are joined by a disulfide bond.

This sequence belongs to the thioredoxin family.

In terms of biological role, participates in various redox reactions through the reversible oxidation of its active center dithiol to a disulfide and catalyzes dithiol-disulfide exchange reactions. The protein is Thioredoxin (trxA) of Chlorobaculum thiosulfatiphilum (Chlorobium limicola f.sp. thiosulfatophilum).